The following is a 162-amino-acid chain: 2-C-methyl-D-erythritol 2,4-cyclodiphosphate synthase (162 aa).

Positions 12 and 14 each coordinate a divalent metal cation. 4-CDP-2-C-methyl-D-erythritol 2-phosphate contacts are provided by residues 12 to 14 (DVH) and 38 to 39 (HS). Residue histidine 46 coordinates a divalent metal cation. 4-CDP-2-C-methyl-D-erythritol 2-phosphate contacts are provided by residues 60-62 (DIG), 136-139 (TTTE), phenylalanine 143, and arginine 146.

The protein belongs to the IspF family. In terms of assembly, homotrimer. It depends on a divalent metal cation as a cofactor.

It catalyses the reaction 4-CDP-2-C-methyl-D-erythritol 2-phosphate = 2-C-methyl-D-erythritol 2,4-cyclic diphosphate + CMP. Its pathway is isoprenoid biosynthesis; isopentenyl diphosphate biosynthesis via DXP pathway; isopentenyl diphosphate from 1-deoxy-D-xylulose 5-phosphate: step 4/6. In terms of biological role, involved in the biosynthesis of isopentenyl diphosphate (IPP) and dimethylallyl diphosphate (DMAPP), two major building blocks of isoprenoid compounds. Catalyzes the conversion of 4-diphosphocytidyl-2-C-methyl-D-erythritol 2-phosphate (CDP-ME2P) to 2-C-methyl-D-erythritol 2,4-cyclodiphosphate (ME-CPP) with a corresponding release of cytidine 5-monophosphate (CMP). The chain is 2-C-methyl-D-erythritol 2,4-cyclodiphosphate synthase from Porphyromonas gingivalis (strain ATCC 33277 / DSM 20709 / CIP 103683 / JCM 12257 / NCTC 11834 / 2561).